Consider the following 149-residue polypeptide: Large ribosomal subunit protein bL20m (149 aa).

The N-terminal 9 residues, methionine 1–tryptophan 9, are a transit peptide targeting the mitochondrion.

It belongs to the bacterial ribosomal protein bL20 family. As to quaternary structure, component of the mitochondrial large ribosomal subunit (mt-LSU). Mature mammalian 55S mitochondrial ribosomes consist of a small (28S) and a large (39S) subunit. The 28S small subunit contains a 12S ribosomal RNA (12S mt-rRNA) and 30 different proteins. The 39S large subunit contains a 16S rRNA (16S mt-rRNA), a copy of mitochondrial valine transfer RNA (mt-tRNA(Val)), which plays an integral structural role, and 52 different proteins. Interacts with OXA1L.

It localises to the mitochondrion. The polypeptide is Large ribosomal subunit protein bL20m (MRPL20) (Homo sapiens (Human)).